We begin with the raw amino-acid sequence, 170 residues long: Calcineurin subunit B type 1 (170 aa).

A lipid anchor (N-myristoyl glycine) is attached at Gly2. 4 EF-hand domains span residues 18–46 (DEIKRLGKRFKKLDLDNSGSLSVEEFMSL), 50–85 (QQNPLVQRVIDIFDTDGNGEVDFKEFIEGVSQFSVK), 87–122 (DKEQKLRFAFRIYDMDKDGYISNGELFQVLKMMVGN), and 128–163 (QLQQIVDKTIINADKDGDGRISFEEFCAVVGGLDIH). 15 residues coordinate Ca(2+): Asp31, Asp33, Ser35, Ser37, Glu42, Asp63, Asp65, Asn67, Glu69, Glu74, Asp100, Asp102, Asp104, Tyr106, and Glu111. The residue at position 106 (Tyr106) is a Phosphotyrosine. Residues 131–136 (QIVDKT) are calcineurin A binding. Ca(2+)-binding residues include Asp141, Asp143, Asp145, Arg147, and Glu152.

It belongs to the calcineurin regulatory subunit family. As to quaternary structure, forms a complex composed of a calmodulin-dependent catalytic subunit (also known as calcineurin A) and a regulatory Ca(2+)-binding subunit (also known as calcineurin B). There are three catalytic subunits, each encoded by a separate gene (PPP3CA, PPP3CB, and PPP3CC) and two regulatory subunits which are also encoded by separate genes (PPP3R1 and PPP3R2). The interaction between the 2 subunits is Ca(2+)-independent. Interacts with catalytic subunit PPP3CA/calcineurin A. Interacts with catalytic subunit PPP3CB/calcineurin A. Interacts with CIB1 (via C-terminal region); the interaction increases upon cardiomyocyte hypertrophy. Interacts with RCAN1. Interacts with SPATA33 (via PQIIIT motif).

Its subcellular location is the cytoplasm. It is found in the cytosol. It localises to the cell membrane. The protein localises to the sarcolemma. Regulatory subunit of calcineurin, a calcium-dependent, calmodulin stimulated protein phosphatase. Confers calcium sensitivity. The protein is Calcineurin subunit B type 1 (PPP3R1) of Bos taurus (Bovine).